We begin with the raw amino-acid sequence, 270 residues long: Regulatory protein RecX (270 aa).

The protein belongs to the RecX family.

It localises to the cytoplasm. Its function is as follows. Modulates RecA activity. This is Regulatory protein RecX from Bacillus mycoides (strain KBAB4) (Bacillus weihenstephanensis).